Reading from the N-terminus, the 80-residue chain is MTEEEIFNKIADMISERFSIDRDKITKDLNFQNDLDADSIDFVELVMDLEDTFGAEIPDDDAEKLQTVGEAVEYIKSHQN.

A Carrier domain is found at 1–79; that stretch reads MTEEEIFNKI…EAVEYIKSHQ (79 aa). An O-(pantetheine 4'-phosphoryl)serine modification is found at Ser39.

Belongs to the acyl carrier protein (ACP) family. 4'-phosphopantetheine is transferred from CoA to a specific serine of apo-ACP by AcpS. This modification is essential for activity because fatty acids are bound in thioester linkage to the sulfhydryl of the prosthetic group.

It is found in the cytoplasm. It functions in the pathway lipid metabolism; fatty acid biosynthesis. Carrier of the growing fatty acid chain in fatty acid biosynthesis. The sequence is that of Acyl carrier protein from Lactobacillus johnsonii (strain CNCM I-12250 / La1 / NCC 533).